Here is a 219-residue protein sequence, read N- to C-terminus: UPF0502 protein Gmet_0262 (219 aa).

This sequence belongs to the UPF0502 family.

This Geobacter metallireducens (strain ATCC 53774 / DSM 7210 / GS-15) protein is UPF0502 protein Gmet_0262.